A 228-amino-acid chain; its full sequence is uncharacterized protein (228 aa).

Helical transmembrane passes span 14–34 (GWYI…MWLI), 53–73 (FLII…VLIV), 108–128 (GLTF…FFWL), 148–168 (AVKM…PIFF), 178–198 (TIIS…GFSI), and 200–220 (SVVY…YMAI).

The protein localises to the cell membrane. This is an uncharacterized protein from Bacillus subtilis (strain 168).